A 165-amino-acid chain; its full sequence is Protein FAM219A (165 aa).

At Met-1 the chain carries N-acetylmethionine. Residues 1–114 (MMEEIDRFQV…SRYSSSGYSS (114 aa)) form a disordered region. A compositionally biased stretch (basic and acidic residues) spans 32 to 44 (CDAREEKQRELAR). The segment covering 49–63 (KNGSMGSPVNQQPKK) has biased composition (polar residues). Ser-55 and Ser-85 each carry phosphoserine. A Phosphothreonine modification is found at Thr-96. 2 positions are modified to phosphoserine: Ser-98 and Ser-105. The segment covering 105–114 (SRYSSSGYSS) has biased composition (low complexity).

Belongs to the FAM219 family.

This chain is Protein FAM219A (FAM219A), found in Macaca fascicularis (Crab-eating macaque).